The following is a 443-amino-acid chain: Probable nitrate/nitrite antiporter NarK2 (443 aa).

Helical transmembrane passes span 32–52, 66–86, 95–115, 123–143, 172–192, 210–230, 256–276, 292–312, 314–334, 346–366, 383–403, and 409–429; these read ITTFNLTLSFITWYVVSALVV, LFWLTAMPGLAGGTLRIIWTF, HLVTFSTLLLLIPLLGWGFAV, WVLLLLAFLAGIGGGHFSGYM, IVQFVTPWIIGFALFGSLLGG, NATFAWVPFVLLGALLAWVYL, SLYIMTFGSFSGFSAIFPLLI, YAFLGPLVGSLARVIAGPISD, LGGAIVTQVSAIGIFLSALLV, FPMFVVAMLLIFFFSGVGNAS, VIGWTAAVAAYGPFLFSTLAA, and TGGFTAFFYGLMVFYAFNFFL.

This sequence belongs to the major facilitator superfamily. Nitrate/nitrite porter (TC 2.A.1.8) family.

It is found in the cell membrane. The catalysed reaction is nitrate(in) + nitrite(out) = nitrate(out) + nitrite(in). Its function is as follows. Probable nitrate/nitrite antiporter that may be involved in nitrate import and nitrite export during anaerobic growth. The sequence is that of Probable nitrate/nitrite antiporter NarK2 from Thermus thermophilus.